The following is a 597-amino-acid chain: Fructan 1-exohydrolase (597 aa).

An N-terminal signal peptide occupies residues 1 to 15; that stretch reads MAQAWAFLLPVLVFG. D76 is an active-site residue. N-linked (GlcNAc...) asparagine glycans are attached at residues N169, N237, and N249. C447 and C493 form a disulfide bridge. A glycan (N-linked (GlcNAc...) asparagine) is linked at N568.

The protein belongs to the glycosyl hydrolase 32 family.

The catalysed reaction is Hydrolysis of terminal, non-reducing (2-&gt;1)-linked beta-D-fructofuranose residues in fructans.. Its activity is regulated as follows. Inhibited by sucrose. Functionally, hydrolyzes inulin-type beta-(2,1)-fructans. May play a role as a beta-(2,1)-trimmer during graminan biosynthesis. The protein is Fructan 1-exohydrolase of Triticum urartu (Red wild einkorn).